Consider the following 470-residue polypeptide: Retinoic acid receptor RXR-gamma (470 aa).

A modulating region spans residues 1–145 (MHLATETAPS…NSPGALTKHI (145 aa)). 2 NR C4-type zinc fingers span residues 146-166 (CAICGDRSSGKHYGVYSCEGC) and 182-206 (CRDSKDCLIDKRQRNRCQYCRYQKC). Positions 146–211 (CAICGDRSSG…RYQKCLAMGM (66 aa)) form a DNA-binding region, nuclear receptor. Residues 212 to 235 (KREAVQEERQRSREKSDTEAESTS) are hinge. The span at 217-229 (QEERQRSREKSDT) shows a compositional bias: basic and acidic residues. The tract at residues 217 to 242 (QEERQRSREKSDTEAESTSSTSEEMP) is disordered. The region spanning 238–466 (SEEMPVERIL…TFLMEMLETP (229 aa)) is the NR LBD domain.

The protein belongs to the nuclear hormone receptor family. NR2 subfamily. As to quaternary structure, homodimer. Heterodimer; with a rar molecule. Binds DNA preferentially as a rar/rxr heterodimer.

It localises to the nucleus. Its function is as follows. Receptor for retinoic acid. Retinoic acid receptors bind as heterodimers to their target response elements in response to their ligands, all-trans or 9-cis retinoic acid, and regulate gene expression in various biological processes. The rar/rxr heterodimers bind to the retinoic acid response elements (RARE) composed of tandem 5'-AGGTCA-3' sites known as DR1-DR5. The high affinity ligand for rxrs is 9-cis retinoic acid. The sequence is that of Retinoic acid receptor RXR-gamma (rxrg) from Xenopus laevis (African clawed frog).